Consider the following 204-residue polypeptide: Probable chorismate pyruvate-lyase (204 aa).

The substrate site is built by Arg-75, Leu-113, and Glu-160.

It belongs to the UbiC family.

It localises to the cytoplasm. The enzyme catalyses chorismate = 4-hydroxybenzoate + pyruvate. It functions in the pathway cofactor biosynthesis; ubiquinone biosynthesis. Its function is as follows. Removes the pyruvyl group from chorismate, with concomitant aromatization of the ring, to provide 4-hydroxybenzoate (4HB) for the ubiquinone pathway. The sequence is that of Probable chorismate pyruvate-lyase from Alcanivorax borkumensis (strain ATCC 700651 / DSM 11573 / NCIMB 13689 / SK2).